The chain runs to 434 residues: Maintenance of mitochondrial morphology protein 1 (434 aa).

Over methionine 1 to glycine 105 the chain is Lumenal. Residues leucine 106 to phenylalanine 126 traverse the membrane as a helical segment. The Cytoplasmic segment spans residues serine 127–aspartate 434. The SMP-LTD domain maps to serine 194–proline 408. The tract at residues lysine 415–aspartate 434 is disordered.

Belongs to the MMM1 family. Homodimer. Component of the ER-mitochondria encounter structure (ERMES) or MDM complex, composed of MMM1, MDM10, MDM12 and MDM34. An MMM1 homodimer associates with one molecule of MDM12 on each side in a pairwise head-to-tail manner, and the SMP-LTD domains of MMM1 and MDM12 generate a continuous hydrophobic tunnel for phospholipid trafficking.

It localises to the endoplasmic reticulum membrane. In terms of biological role, component of the ERMES/MDM complex, which serves as a molecular tether to connect the endoplasmic reticulum (ER) and mitochondria. Components of this complex are involved in the control of mitochondrial shape and protein biogenesis, and function in nonvesicular lipid trafficking between the ER and mitochondria. The MDM12-MMM1 subcomplex functions in the major beta-barrel assembly pathway that is responsible for biogenesis of all outer membrane beta-barrel proteins, and acts in a late step after the SAM complex. The MDM10-MDM12-MMM1 subcomplex further acts in the TOM40-specific pathway after the action of the MDM12-MMM1 complex. Essential for establishing and maintaining the structure of mitochondria and maintenance of mtDNA nucleoids. This is Maintenance of mitochondrial morphology protein 1 from Kluyveromyces lactis (strain ATCC 8585 / CBS 2359 / DSM 70799 / NBRC 1267 / NRRL Y-1140 / WM37) (Yeast).